The chain runs to 649 residues: Protein WHI4 (649 aa).

A phosphoserine mark is found at Ser-22 and Ser-206. Disordered regions lie at residues 196-217 (EHVS…SSAQ) and 228-247 (ISYG…KPRP). The span at 228-238 (ISYGKTSSSPL) shows a compositional bias: polar residues. Residues Ser-258 and Ser-283 each carry the phosphoserine modification. 2 disordered regions span residues 438–461 (LDLN…SIFN) and 604–649 (QLPH…YGKS). Residues 533-625 (NTLYVGNLPP…GGIRLSFSKN (93 aa)) enclose the RRM domain. The span at 631–649 (GSNSRSKSGYSFNGSYGKS) shows a compositional bias: polar residues.

Phosphorylated by PKA in vitro.

It is found in the cytoplasm. Functionally, has a partially redundant function to WHI3, a dosage-dependent modulator of cell size. This chain is Protein WHI4 (WHI4), found in Saccharomyces cerevisiae (strain ATCC 204508 / S288c) (Baker's yeast).